We begin with the raw amino-acid sequence, 236 residues long: (5-formylfuran-3-yl)methyl phosphate synthase (236 aa).

The active-site Schiff-base intermediate with substrate is lysine 27. Lysine 85 functions as the Proton acceptor in the catalytic mechanism.

Belongs to the MfnB family.

It catalyses the reaction 2 D-glyceraldehyde 3-phosphate = 4-(hydroxymethyl)-2-furancarboxaldehyde phosphate + phosphate + 2 H2O. It participates in cofactor biosynthesis; methanofuran biosynthesis. In terms of biological role, catalyzes the formation of 4-(hydroxymethyl)-2-furancarboxaldehyde phosphate (4-HFC-P) from two molecules of glyceraldehyde-3-P (GA-3-P). The sequence is that of (5-formylfuran-3-yl)methyl phosphate synthase from Methanococcus maripaludis (strain C6 / ATCC BAA-1332).